The chain runs to 236 residues: Small ribosomal subunit protein uS2c (236 aa).

It belongs to the universal ribosomal protein uS2 family.

It localises to the plastid. The protein resides in the chloroplast. This Nandina domestica (Heavenly bamboo) protein is Small ribosomal subunit protein uS2c (rps2).